A 139-amino-acid polypeptide reads, in one-letter code: Thioredoxin-like protein Clot (139 aa).

The Thioredoxin domain occupies 1–136 (MTVEKVDATV…LADKVDAVVN (136 aa)). Active-site nucleophile residues include C49 and C52. Cysteines 49 and 52 form a disulfide.

Belongs to the thioredoxin family.

Functionally, probable thiol-disulfide oxidoreductase that may participate in various redox reactions. This Oryza sativa subsp. japonica (Rice) protein is Thioredoxin-like protein Clot.